The sequence spans 505 residues: Glutamyl-tRNA(Gln) amidotransferase subunit A, mitochondrial (505 aa).

Catalysis depends on charge relay system residues Lys76 and Ser158. Ser182 acts as the Acyl-ester intermediate in catalysis.

This sequence belongs to the amidase family. GatA subfamily. As to quaternary structure, subunit of the heterotrimeric GatCAB amidotransferase (AdT) complex, composed of A, B and C subunits.

It localises to the mitochondrion. The enzyme catalyses L-glutamyl-tRNA(Gln) + L-glutamine + ATP + H2O = L-glutaminyl-tRNA(Gln) + L-glutamate + ADP + phosphate + H(+). In terms of biological role, allows the formation of correctly charged Gln-tRNA(Gln) through the transamidation of misacylated Glu-tRNA(Gln) in the mitochondria. The reaction takes place in the presence of glutamine and ATP through an activated gamma-phospho-Glu-tRNA(Gln). The chain is Glutamyl-tRNA(Gln) amidotransferase subunit A, mitochondrial from Ixodes scapularis (Black-legged tick).